The chain runs to 108 residues: UPF0102 protein Sputcn32_3693 (108 aa).

The protein belongs to the UPF0102 family.

The protein is UPF0102 protein Sputcn32_3693 of Shewanella putrefaciens (strain CN-32 / ATCC BAA-453).